We begin with the raw amino-acid sequence, 109 residues long: Flagellar hook-basal body complex protein FliE (109 aa).

It belongs to the FliE family.

The protein resides in the bacterial flagellum basal body. The polypeptide is Flagellar hook-basal body complex protein FliE (Pseudomonas paraeruginosa (strain DSM 24068 / PA7) (Pseudomonas aeruginosa (strain PA7))).